A 319-amino-acid polypeptide reads, in one-letter code: Bidirectional sugar transporter SWEET15 (319 aa).

At 1–10 the chain is on the extracellular side; sequence MAFMSMERST. A helical transmembrane segment spans residues 11-31; that stretch reads WAFTFGILGNLISLMVFLSPL. The 87-residue stretch at 13-99 folds into the MtN3/slv 1 domain; sequence FTFGILGNLI…AMYLAYAPKS (87 aa). Residues 32–50 are Cytoplasmic-facing; that stretch reads PTFYRVYRKKSTEGFQSTP. A helical membrane pass occupies residues 51–71; the sequence is YVVTLFSCMLWMYYAFVKSGA. Residue Glu72 is a topological domain, extracellular. A helical transmembrane segment spans residues 73–93; the sequence is LLVTINGVGCVIETVYLAMYL. Residues 94-106 are Cytoplasmic-facing; that stretch reads AYAPKSARMLTAK. A helical transmembrane segment spans residues 107–127; sequence MLLGLNIGLFGVIALVTLLLS. The Extracellular segment spans residues 128 to 134; it reads RGELRVH. Residues 135-155 form a helical membrane-spanning segment; it reads VLGWICVAVSLSVFAAPLSII. Residues 135 to 219 enclose the MtN3/slv 2 domain; the sequence is VLGWICVAVS…ALYMAYRSKK (85 aa). Over 156–167 the chain is Cytoplasmic; it reads RLVIRTKSVEFM. The chain crosses the membrane as a helical span at residues 168 to 188; the sequence is PFSLSFFLVLSAVIWFLYGLL. Over 189–191 the chain is Extracellular; the sequence is KKD. A helical membrane pass occupies residues 192–212; sequence VFVALPNVLGFVFGVAQMALY. At 213–319 the chain is on the cytoplasmic side; the sequence is MAYRSKKPLV…KPDMAIVVEV (107 aa).

It belongs to the SWEET sugar transporter family. As to quaternary structure, forms homooligomers and/or heterooligomers.

Its subcellular location is the cell membrane. Its function is as follows. Mediates both low-affinity uptake and efflux of sugar across the plasma membrane. In terms of biological role, confers blight susceptibility. Confers TAL effector-mediated susceptibility to Xanthomonas oryzae pv. oryzae. This chain is Bidirectional sugar transporter SWEET15 (SWEET15), found in Oryza sativa subsp. japonica (Rice).